The following is a 233-amino-acid chain: Large ribosomal subunit protein uL1 (233 aa).

Belongs to the universal ribosomal protein uL1 family. In terms of assembly, part of the 50S ribosomal subunit.

Functionally, binds directly to 23S rRNA. The L1 stalk is quite mobile in the ribosome, and is involved in E site tRNA release. Its function is as follows. Protein L1 is also a translational repressor protein, it controls the translation of the L11 operon by binding to its mRNA. The sequence is that of Large ribosomal subunit protein uL1 from Shewanella piezotolerans (strain WP3 / JCM 13877).